The primary structure comprises 219 residues: Cysteine dioxygenase (219 aa).

Fe cation contacts are provided by H106, H108, and H166. The segment at residues 113 to 183 (CVMKILHGSL…NDFAISLHLY (71 aa)) is a cross-link (3'-(S-cysteinyl)-tyrosine (Cys-Tyr)).

It belongs to the cysteine dioxygenase family. It depends on Fe cation as a cofactor. In terms of processing, the thioether cross-link between Cys-113 and Tyr-183 plays a structural role through stabilizing the Fe(2+) ion, and prevents the production of highly damaging free hydroxyl radicals by holding the oxygen radical via hydroxyl hydrogen.

The enzyme catalyses L-cysteine + O2 = 3-sulfino-L-alanine + H(+). Functionally, cysteine dioxygenase involved in sulfite formation from cysteine. Required for keratin degradation and plays an important role in filamentous growth and virulence. In Arthroderma benhamiae (Trichophyton mentagrophytes), this protein is Cysteine dioxygenase.